The sequence spans 376 residues: S-adenosylmethionine synthase (376 aa).

H14 is a binding site for ATP. Residue D16 coordinates Mg(2+). E42 contacts K(+). Residues E55 and Q98 each contribute to the L-methionine site. Positions 98 to 108 are flexible loop; sequence QSPEIALGISS. ATP-binding positions include 158–160, 224–225, D233, 239–240, A256, and K260; these read DGK, RF, and RK. Position 233 (D233) interacts with L-methionine. K264 is an L-methionine binding site.

It belongs to the AdoMet synthase family. As to quaternary structure, homotetramer; dimer of dimers. Mg(2+) serves as cofactor. Requires K(+) as cofactor.

Its subcellular location is the cytoplasm. It catalyses the reaction L-methionine + ATP + H2O = S-adenosyl-L-methionine + phosphate + diphosphate. It participates in amino-acid biosynthesis; S-adenosyl-L-methionine biosynthesis; S-adenosyl-L-methionine from L-methionine: step 1/1. Functionally, catalyzes the formation of S-adenosylmethionine (AdoMet) from methionine and ATP. The overall synthetic reaction is composed of two sequential steps, AdoMet formation and the subsequent tripolyphosphate hydrolysis which occurs prior to release of AdoMet from the enzyme. In Aquifex aeolicus (strain VF5), this protein is S-adenosylmethionine synthase.